Reading from the N-terminus, the 129-residue chain is MATRKTTRRRRVKKNIESGVAHIHSTFNNTLVMITDMQGNAIAWSSAGSLGFKGSRKSTPFAAQMAAEAAAKASMEHGMKTVEVAVKGPGSGREAAIRALQATGLEVSAIRDVTPVPHNGSRPPKRRRV.

This sequence belongs to the universal ribosomal protein uS11 family. In terms of assembly, part of the 30S ribosomal subunit. Interacts with proteins S7 and S18. Binds to IF-3.

Its function is as follows. Located on the platform of the 30S subunit, it bridges several disparate RNA helices of the 16S rRNA. Forms part of the Shine-Dalgarno cleft in the 70S ribosome. The protein is Small ribosomal subunit protein uS11 of Lactiplantibacillus plantarum (strain ATCC BAA-793 / NCIMB 8826 / WCFS1) (Lactobacillus plantarum).